A 273-amino-acid chain; its full sequence is Inactive endochitinase At2g43600 (273 aa).

Residues Met-1–Ser-22 form the signal peptide. Residues Gln-23–Ile-61 enclose the Chitin-binding type-1 domain. 4 disulfide bridges follow: Cys-25–Cys-37, Cys-30–Cys-43, Cys-36–Cys-50, and Cys-54–Cys-59. The interval Gly-78 to Cys-273 is catalytic. Asn-99 carries N-linked (GlcNAc...) asparagine glycosylation.

This sequence belongs to the glycosyl hydrolase 19 family. Chitinase class I subfamily.

This Arabidopsis thaliana (Mouse-ear cress) protein is Inactive endochitinase At2g43600.